We begin with the raw amino-acid sequence, 442 residues long: D-aminoacyl-tRNA deacylase (442 aa).

This sequence belongs to the DtdA deacylase family. As to quaternary structure, monomer. Requires Zn(2+) as cofactor.

The catalysed reaction is a D-aminoacyl-tRNA + H2O = a tRNA + a D-alpha-amino acid + H(+). It carries out the reaction glycyl-tRNA(Ala) + H2O = tRNA(Ala) + glycine + H(+). D-aminoacyl-tRNA deacylase with broad substrate specificity. By recycling D-aminoacyl-tRNA to D-amino acids and free tRNA molecules, this enzyme counteracts the toxicity associated with the formation of D-aminoacyl-tRNA entities in vivo. The sequence is that of D-aminoacyl-tRNA deacylase from Methanospirillum hungatei JF-1 (strain ATCC 27890 / DSM 864 / NBRC 100397 / JF-1).